The following is a 336-amino-acid chain: Holliday junction branch migration complex subunit RuvB (336 aa).

The segment at 1–182 (MKERIVNLET…FGMSFRMQFY (182 aa)) is large ATPase domain (RuvB-L). ATP contacts are provided by residues Leu21, Arg22, Gly63, Lys66, Thr67, Ser68, 129–131 (EDF), Arg172, Tyr182, and Arg219. Position 67 (Thr67) interacts with Mg(2+). The small ATPAse domain (RuvB-S) stretch occupies residues 183-253 (NPSELALIIK…ITLHALNELG (71 aa)). A head domain (RuvB-H) region spans residues 256–336 (ELGFDEADLA…IPTLNPQTLF (81 aa)). The DNA site is built by Arg310 and Arg315.

Belongs to the RuvB family. In terms of assembly, homohexamer. Forms an RuvA(8)-RuvB(12)-Holliday junction (HJ) complex. HJ DNA is sandwiched between 2 RuvA tetramers; dsDNA enters through RuvA and exits via RuvB. An RuvB hexamer assembles on each DNA strand where it exits the tetramer. Each RuvB hexamer is contacted by two RuvA subunits (via domain III) on 2 adjacent RuvB subunits; this complex drives branch migration. In the full resolvosome a probable DNA-RuvA(4)-RuvB(12)-RuvC(2) complex forms which resolves the HJ.

The protein resides in the cytoplasm. It catalyses the reaction ATP + H2O = ADP + phosphate + H(+). Its function is as follows. The RuvA-RuvB-RuvC complex processes Holliday junction (HJ) DNA during genetic recombination and DNA repair, while the RuvA-RuvB complex plays an important role in the rescue of blocked DNA replication forks via replication fork reversal (RFR). RuvA specifically binds to HJ cruciform DNA, conferring on it an open structure. The RuvB hexamer acts as an ATP-dependent pump, pulling dsDNA into and through the RuvAB complex. RuvB forms 2 homohexamers on either side of HJ DNA bound by 1 or 2 RuvA tetramers; 4 subunits per hexamer contact DNA at a time. Coordinated motions by a converter formed by DNA-disengaged RuvB subunits stimulates ATP hydrolysis and nucleotide exchange. Immobilization of the converter enables RuvB to convert the ATP-contained energy into a lever motion, pulling 2 nucleotides of DNA out of the RuvA tetramer per ATP hydrolyzed, thus driving DNA branch migration. The RuvB motors rotate together with the DNA substrate, which together with the progressing nucleotide cycle form the mechanistic basis for DNA recombination by continuous HJ branch migration. Branch migration allows RuvC to scan DNA until it finds its consensus sequence, where it cleaves and resolves cruciform DNA. This Helicobacter pylori (strain ATCC 700392 / 26695) (Campylobacter pylori) protein is Holliday junction branch migration complex subunit RuvB.